We begin with the raw amino-acid sequence, 516 residues long: MSSWITGLADKAENILNKLDQNAATALQTENATGSADPMRRSMTSSTQSLSTSLKSTLSPVRRSGANSSSSVKSDGGVSVVTKDMRQKMTTSASFSNSPDISANSMDTNELAAFKIALNEITAERDELRLRLEDLNNETEKFDLHQHTQVLEALVKSLSEERDKAVHDYNEAQAANMAYVHSISELETNLAKLQQEYISAAHKLQMQTKETEQQRQELQEYRIKAQRALQAKDSLIAELKAKPTEEGADPNLVSKDSETRFLQIEHESLKQELEHANEELQKARLQLDDYVSQERQRQVELSSARQREETLAKELRQAREHSVTSESDQRVLTQELASLRQQLSNQMAAAATRLQEREQQLQQMRQRLSEEANTGAKSDYETRLKALTQSLVERQSLLERVTSERNALRLQHEKAQTQLQQNMHLVEMESQRGSSRHTMLNSTDDVKAQFPLLMHPSPFDNRVARRFKRALRQADSMGIRVGTFLRRYPMMRVSVIVYVALLHLWVMFVLLSTTPN.

Residues 1–492 are Cytoplasmic-facing; the sequence is MSSWITGLAD…TFLRRYPMMR (492 aa). Residues 28-80 form a disordered region; it reads QTENATGSADPMRRSMTSSTQSLSTSLKSTLSPVRRSGANSSSSVKSDGGVSV. Residues 42-80 are compositionally biased toward low complexity; sequence SMTSSTQSLSTSLKSTLSPVRRSGANSSSSVKSDGGVSV. Residues serine 64 and serine 74 each carry the phosphoserine modification. The stretch at 108–423 forms a coiled coil; the sequence is TNELAAFKIA…KAQTQLQQNM (316 aa). The chain crosses the membrane as a helical; Anchor for type IV membrane protein span at residues 493 to 513; that stretch reads VSVIVYVALLHLWVMFVLLST. Residues 514-516 lie on the Lumenal side of the membrane; it reads TPN.

Its subcellular location is the golgi apparatus membrane. In terms of biological role, may be involved in maintaining Golgi structure and in intra-Golgi transport. This is Golgin-84 (Golgin84) from Drosophila melanogaster (Fruit fly).